The sequence spans 181 residues: Adenylate kinase (181 aa).

10–15 (GAGKGT) provides a ligand contact to ATP. An NMP region spans residues 30–59 (STGELFRKNIQDGTKLGVEAKRYLDAGDLV). AMP is bound by residues Thr31, Arg36, 57 to 59 (DLV), 85 to 88 (GYPR), and Gln92. The segment at 126-132 (GRGRADD) is LID. Arg127 contributes to the ATP binding site. Residues Arg129 and Arg140 each coordinate AMP. Residue Gly166 participates in ATP binding.

The protein belongs to the adenylate kinase family. Monomer.

It localises to the cytoplasm. The catalysed reaction is AMP + ATP = 2 ADP. Its pathway is purine metabolism; AMP biosynthesis via salvage pathway; AMP from ADP: step 1/1. In terms of biological role, catalyzes the reversible transfer of the terminal phosphate group between ATP and AMP. Plays an important role in cellular energy homeostasis and in adenine nucleotide metabolism. This is Adenylate kinase from Mycobacterium ulcerans (strain Agy99).